Reading from the N-terminus, the 168-residue chain is MSTLLLEAAPNTVLGNIIVVSGAFIILLVLLRLFAWNAITSVFASRAKKISDDIDAAEANNKQAADLVKQRQAELAGSKEEAANIIQVANDTASQNRAKVLATANEEATSLKKRAQEDIEQERKEALNTVKGDVADISVQIAEKLIGQSLDASAQQELIDSYLAKLGE.

Residues 11 to 31 (NTVLGNIIVVSGAFIILLVLL) form a helical membrane-spanning segment.

The protein belongs to the ATPase B chain family. In terms of assembly, F-type ATPases have 2 components, F(1) - the catalytic core - and F(0) - the membrane proton channel. F(1) has five subunits: alpha(3), beta(3), gamma(1), delta(1), epsilon(1). F(0) has three main subunits: a(1), b(2) and c(10-14). The alpha and beta chains form an alternating ring which encloses part of the gamma chain. F(1) is attached to F(0) by a central stalk formed by the gamma and epsilon chains, while a peripheral stalk is formed by the delta and b chains.

It is found in the cell membrane. Its function is as follows. F(1)F(0) ATP synthase produces ATP from ADP in the presence of a proton or sodium gradient. F-type ATPases consist of two structural domains, F(1) containing the extramembraneous catalytic core and F(0) containing the membrane proton channel, linked together by a central stalk and a peripheral stalk. During catalysis, ATP synthesis in the catalytic domain of F(1) is coupled via a rotary mechanism of the central stalk subunits to proton translocation. In terms of biological role, component of the F(0) channel, it forms part of the peripheral stalk, linking F(1) to F(0). The protein is ATP synthase subunit b of Lactococcus lactis subsp. lactis (strain IL1403) (Streptococcus lactis).